Reading from the N-terminus, the 100-residue chain is Aspartyl/glutamyl-tRNA(Asn/Gln) amidotransferase subunit C (100 aa).

The protein belongs to the GatC family. Heterotrimer of A, B and C subunits.

It carries out the reaction L-glutamyl-tRNA(Gln) + L-glutamine + ATP + H2O = L-glutaminyl-tRNA(Gln) + L-glutamate + ADP + phosphate + H(+). The catalysed reaction is L-aspartyl-tRNA(Asn) + L-glutamine + ATP + H2O = L-asparaginyl-tRNA(Asn) + L-glutamate + ADP + phosphate + 2 H(+). Its function is as follows. Allows the formation of correctly charged Asn-tRNA(Asn) or Gln-tRNA(Gln) through the transamidation of misacylated Asp-tRNA(Asn) or Glu-tRNA(Gln) in organisms which lack either or both of asparaginyl-tRNA or glutaminyl-tRNA synthetases. The reaction takes place in the presence of glutamine and ATP through an activated phospho-Asp-tRNA(Asn) or phospho-Glu-tRNA(Gln). The chain is Aspartyl/glutamyl-tRNA(Asn/Gln) amidotransferase subunit C from Streptococcus pneumoniae serotype 19F (strain G54).